The primary structure comprises 92 residues: Small ribosomal subunit protein uS19 (92 aa).

Belongs to the universal ribosomal protein uS19 family.

Functionally, protein S19 forms a complex with S13 that binds strongly to the 16S ribosomal RNA. This Corynebacterium aurimucosum (strain ATCC 700975 / DSM 44827 / CIP 107346 / CN-1) (Corynebacterium nigricans) protein is Small ribosomal subunit protein uS19.